Reading from the N-terminus, the 147-residue chain is Hemoglobin subunit beta (147 aa).

N-acetylvaline is present on Val2. In terms of domain architecture, Globin spans 3 to 147; sequence HLSAEEKGLV…VATALAHKYH (145 aa). Phosphothreonine is present on Thr13. Ser45 bears the Phosphoserine mark. N6-acetyllysine is present on Lys60. His64 serves as a coordination point for heme b. Lys83 is modified (N6-acetyllysine). His93 is a heme b binding site. Cys94 carries the S-nitrosocysteine modification. Lys145 is subject to N6-acetyllysine.

This sequence belongs to the globin family. In terms of assembly, heterotetramer of two alpha chains and two beta chains. In terms of tissue distribution, red blood cells.

Involved in oxygen transport from the lung to the various peripheral tissues. The protein is Hemoglobin subunit beta (HBB) of Scapanus orarius (Coast mole).